Reading from the N-terminus, the 102-residue chain is Small ribosomal subunit protein bS20 (102 aa).

It belongs to the bacterial ribosomal protein bS20 family.

In terms of biological role, binds directly to 16S ribosomal RNA. The chain is Small ribosomal subunit protein bS20 from Synechococcus sp. (strain WH7803).